A 322-amino-acid polypeptide reads, in one-letter code: 6-deoxy-6-sulfo-D-fructose transketolase subunit SqwH (322 aa).

It belongs to the transketolase family. Forms a complex with SqwG. Thiamine diphosphate is required as a cofactor.

It catalyses the reaction 6-deoxy-6-sulfo-D-fructose + D-glyceraldehyde 3-phosphate = 4-deoxy-4-sulfo-D-erythrose + D-xylulose 5-phosphate. The enzyme catalyses 4-deoxy-4-sulfo-D-erythrulose + D-glyceraldehyde 3-phosphate = sulfoacetaldehyde + D-xylulose 5-phosphate. In terms of biological role, part of the sulfo-TK pathway, a D-sulfoquinovose degradation pathway that produces 2-hydroxyethane-1-sulfonate (isethionate). Catalyzes two steps of the pathway: the formation of 4-deoxy-4-sulfoerythrose (SE) and xylulose 5-phosphate from 6-deoxy-6-sulfo-D-fructose (SF) and glyceraldehyde 3-phosphate, and the formation of sulfoacetaldehyde (SA) and xylulose 5-phosphate from 4-deoxy-4-sulfo-D-erythrulose (SEu) and glyceraldehyde 3-phosphate. The protein is 6-deoxy-6-sulfo-D-fructose transketolase subunit SqwH of Clostridium sp. (strain MSTE9).